The primary structure comprises 553 residues: Glucose-6-phosphate isomerase (553 aa).

D-glucose 6-phosphate is bound by residues 164-165 (GS), 215-220 (SKTFTT), glutamine 359, glutamate 363, histidine 394, and lysine 516. The active-site Proton donor is the glutamate 363. Active-site residues include histidine 394 and lysine 516.

This sequence belongs to the GPI family. As to quaternary structure, homodimer.

It is found in the cytoplasm. The protein resides in the cytosol. It catalyses the reaction alpha-D-glucose 6-phosphate = beta-D-fructose 6-phosphate. Its pathway is carbohydrate degradation; glycolysis; D-glyceraldehyde 3-phosphate and glycerone phosphate from D-glucose: step 2/4. Its function is as follows. In the cytoplasm, catalyzes the conversion of glucose-6-phosphate to fructose-6-phosphate, the second step in glycolysis, and the reverse reaction during gluconeogenesis. The chain is Glucose-6-phosphate isomerase (pgiA) from Aspergillus oryzae (strain ATCC 42149 / RIB 40) (Yellow koji mold).